A 377-amino-acid polypeptide reads, in one-letter code: Succinyl-diaminopimelate desuccinylase (377 aa).

Residue His67 coordinates Zn(2+). Asp69 is an active-site residue. Asp100 provides a ligand contact to Zn(2+). Residue Glu134 is the Proton acceptor of the active site. Positions 135, 163, and 349 each coordinate Zn(2+).

It belongs to the peptidase M20A family. DapE subfamily. As to quaternary structure, homodimer. The cofactor is Zn(2+). It depends on Co(2+) as a cofactor.

It carries out the reaction N-succinyl-(2S,6S)-2,6-diaminopimelate + H2O = (2S,6S)-2,6-diaminopimelate + succinate. Its pathway is amino-acid biosynthesis; L-lysine biosynthesis via DAP pathway; LL-2,6-diaminopimelate from (S)-tetrahydrodipicolinate (succinylase route): step 3/3. Its function is as follows. Catalyzes the hydrolysis of N-succinyl-L,L-diaminopimelic acid (SDAP), forming succinate and LL-2,6-diaminopimelate (DAP), an intermediate involved in the bacterial biosynthesis of lysine and meso-diaminopimelic acid, an essential component of bacterial cell walls. The polypeptide is Succinyl-diaminopimelate desuccinylase (Haemophilus influenzae (strain PittEE)).